The following is an 890-amino-acid chain: Translation initiation factor IF-2 (890 aa).

Residues 110–216 (ISKPISKAPQ…KKPLIKTQDH (107 aa)) are disordered. Residues 135–148 (VPKRKGLVIIKKKR) show a composition bias toward basic residues. Over residues 184 to 199 (KSYNEPKNKENDDIKK) the composition is skewed to basic and acidic residues. Basic residues predominate over residues 200–210 (QKVKKEKKKPL). Residues 387 to 554 (TRPPVVTIMG…NILLQAEILE (168 aa)) enclose the tr-type G domain. The tract at residues 396-403 (GHVDHGKT) is G1. Residue 396 to 403 (GHVDHGKT) participates in GTP binding. Residues 421–425 (GITQH) are G2. Positions 442-445 (DTPG) are G3. GTP-binding positions include 442 to 446 (DTPGH) and 496 to 499 (NKMD). Positions 496–499 (NKMD) are G4. The segment at 532 to 534 (SAR) is G5.

This sequence belongs to the TRAFAC class translation factor GTPase superfamily. Classic translation factor GTPase family. IF-2 subfamily.

It is found in the cytoplasm. One of the essential components for the initiation of protein synthesis. Protects formylmethionyl-tRNA from spontaneous hydrolysis and promotes its binding to the 30S ribosomal subunits. Also involved in the hydrolysis of GTP during the formation of the 70S ribosomal complex. This chain is Translation initiation factor IF-2, found in Aliarcobacter butzleri (strain RM4018) (Arcobacter butzleri).